The following is a 151-amino-acid chain: UPF0756 membrane protein Lreu_0946 (151 aa).

The next 4 helical transmembrane spans lie at 4–24 (WLFL…SLII), 52–72 (WGVT…QIGF), 77–97 (AAFK…VAIL), and 115–135 (LVLG…GPVI).

This sequence belongs to the UPF0756 family.

The protein localises to the cell membrane. In Limosilactobacillus reuteri (strain DSM 20016) (Lactobacillus reuteri), this protein is UPF0756 membrane protein Lreu_0946.